Reading from the N-terminus, the 441-residue chain is 5-methylthioadenosine/S-adenosylhomocysteine deaminase (441 aa).

Zn(2+) contacts are provided by H70 and H72. Substrate-binding residues include E99 and H191. H218 lines the Zn(2+) pocket. Residues E221 and D306 each coordinate substrate. Residue D306 participates in Zn(2+) binding.

Belongs to the metallo-dependent hydrolases superfamily. MTA/SAH deaminase family. Zn(2+) serves as cofactor.

The catalysed reaction is S-adenosyl-L-homocysteine + H2O + H(+) = S-inosyl-L-homocysteine + NH4(+). It carries out the reaction S-methyl-5'-thioadenosine + H2O + H(+) = S-methyl-5'-thioinosine + NH4(+). In terms of biological role, catalyzes the deamination of 5-methylthioadenosine and S-adenosyl-L-homocysteine into 5-methylthioinosine and S-inosyl-L-homocysteine, respectively. Is also able to deaminate adenosine. The chain is 5-methylthioadenosine/S-adenosylhomocysteine deaminase from Lawsonia intracellularis (strain PHE/MN1-00).